Consider the following 1209-residue polypeptide: DNA-directed RNA polymerase subunit beta' (1209 aa).

4 residues coordinate Zn(2+): cysteine 60, cysteine 62, cysteine 75, and cysteine 78. Residues aspartate 450, aspartate 452, and aspartate 454 each coordinate Mg(2+). 4 residues coordinate Zn(2+): cysteine 819, cysteine 893, cysteine 900, and cysteine 903.

Belongs to the RNA polymerase beta' chain family. The RNAP catalytic core consists of 2 alpha, 1 beta, 1 beta' and 1 omega subunit. When a sigma factor is associated with the core the holoenzyme is formed, which can initiate transcription. The cofactor is Mg(2+). Zn(2+) is required as a cofactor.

The catalysed reaction is RNA(n) + a ribonucleoside 5'-triphosphate = RNA(n+1) + diphosphate. DNA-dependent RNA polymerase catalyzes the transcription of DNA into RNA using the four ribonucleoside triphosphates as substrates. The protein is DNA-directed RNA polymerase subunit beta' of Streptococcus mutans serotype c (strain ATCC 700610 / UA159).